Here is a 326-residue protein sequence, read N- to C-terminus: Vitamin B12 import system permease protein BtuC (326 aa).

Transmembrane regions (helical) follow at residues isoleucine 13–glutamate 35, isoleucine 55–methionine 77, leucine 90–leucine 107, glutamine 111–leucine 133, leucine 146–threonine 168, tryptophan 188–cysteine 205, methionine 242–leucine 264, valine 274–leucine 296, and leucine 303–leucine 322.

The protein belongs to the binding-protein-dependent transport system permease family. FecCD subfamily. As to quaternary structure, the complex is composed of two ATP-binding proteins (BtuD), two transmembrane proteins (BtuC) and a solute-binding protein (BtuF).

It is found in the cell inner membrane. Part of the ABC transporter complex BtuCDF involved in vitamin B12 import. Involved in the translocation of the substrate across the membrane. The chain is Vitamin B12 import system permease protein BtuC from Shigella flexneri.